Reading from the N-terminus, the 382-residue chain is Elongation factor Tu (382 aa).

GTP-binding positions include 1 to 7 (HVDHGKT), 62 to 66 (DCPGH), and 117 to 120 (NKVD). The 190-residue stretch at 1 to 190 (HVDHGKTTLT…AVDEYIPTPQ (190 aa)) folds into the tr-type G domain. T7 provides a ligand contact to Mg(2+).

This sequence belongs to the TRAFAC class translation factor GTPase superfamily. Classic translation factor GTPase family. EF-Tu/EF-1A subfamily. As to quaternary structure, monomer.

Its subcellular location is the cytoplasm. The catalysed reaction is GTP + H2O = GDP + phosphate + H(+). In terms of biological role, GTP hydrolase that promotes the GTP-dependent binding of aminoacyl-tRNA to the A-site of ribosomes during protein biosynthesis. The sequence is that of Elongation factor Tu from Chloroflexus aurantiacus.